The sequence spans 250 residues: 5-oxoprolinase subunit A (250 aa).

Belongs to the LamB/PxpA family. In terms of assembly, forms a complex composed of PxpA, PxpB and PxpC.

It carries out the reaction 5-oxo-L-proline + ATP + 2 H2O = L-glutamate + ADP + phosphate + H(+). In terms of biological role, catalyzes the cleavage of 5-oxoproline to form L-glutamate coupled to the hydrolysis of ATP to ADP and inorganic phosphate. This Paraburkholderia phytofirmans (strain DSM 17436 / LMG 22146 / PsJN) (Burkholderia phytofirmans) protein is 5-oxoprolinase subunit A.